The chain runs to 233 residues: Purine nucleoside phosphorylase DeoD-type (233 aa).

Position 4 (His4) interacts with a purine D-ribonucleoside. Residues Gly20, Arg24, Arg43, and 87–90 (RVGT) contribute to the phosphate site. A purine D-ribonucleoside contacts are provided by residues 179-181 (EME) and 203-204 (SD). The active-site Proton donor is Asp204.

It belongs to the PNP/UDP phosphorylase family. As to quaternary structure, homohexamer; trimer of homodimers.

It catalyses the reaction a purine D-ribonucleoside + phosphate = a purine nucleobase + alpha-D-ribose 1-phosphate. It carries out the reaction a purine 2'-deoxy-D-ribonucleoside + phosphate = a purine nucleobase + 2-deoxy-alpha-D-ribose 1-phosphate. In terms of biological role, catalyzes the reversible phosphorolytic breakdown of the N-glycosidic bond in the beta-(deoxy)ribonucleoside molecules, with the formation of the corresponding free purine bases and pentose-1-phosphate. In Clostridium novyi (strain NT), this protein is Purine nucleoside phosphorylase DeoD-type.